The primary structure comprises 259 residues: 4-hydroxy-tetrahydrodipicolinate reductase (259 aa).

NAD(+)-binding positions include 9–14 (GAGGRM) and E35. R36 lines the NADP(+) pocket. Residues 92–94 (GTT) and 116–119 (APNM) each bind NAD(+). H149 acts as the Proton donor/acceptor in catalysis. H150 contacts (S)-2,3,4,5-tetrahydrodipicolinate. The active-site Proton donor is K153. (S)-2,3,4,5-tetrahydrodipicolinate is bound at residue 159–160 (GT).

It belongs to the DapB family.

The protein resides in the cytoplasm. It carries out the reaction (S)-2,3,4,5-tetrahydrodipicolinate + NAD(+) + H2O = (2S,4S)-4-hydroxy-2,3,4,5-tetrahydrodipicolinate + NADH + H(+). The catalysed reaction is (S)-2,3,4,5-tetrahydrodipicolinate + NADP(+) + H2O = (2S,4S)-4-hydroxy-2,3,4,5-tetrahydrodipicolinate + NADPH + H(+). The protein operates within amino-acid biosynthesis; L-lysine biosynthesis via DAP pathway; (S)-tetrahydrodipicolinate from L-aspartate: step 4/4. Catalyzes the conversion of 4-hydroxy-tetrahydrodipicolinate (HTPA) to tetrahydrodipicolinate. The sequence is that of 4-hydroxy-tetrahydrodipicolinate reductase from Oleidesulfovibrio alaskensis (strain ATCC BAA-1058 / DSM 17464 / G20) (Desulfovibrio alaskensis).